The following is a 420-amino-acid chain: Hemocyanin 2-c chain (420 aa).

The span at 1–12 (DFGHSKKIRKNV) shows a compositional bias: basic residues. The disordered stretch occupies residues 1–20 (DFGHSKKIRKNVHSLTAEEQ). A Cu cation-binding site is contributed by H46. A disulfide bridge connects residues C52 and C63. H66, H73, H185, H189, and H216 together coordinate Cu cation. 2 disulfides stabilise this stretch: C175/C242 and C335/C342.

In terms of processing, O-glycosylated. As to expression, hemolymph.

It localises to the secreted. Its subcellular location is the extracellular space. Functionally, hemocyanins are copper-containing oxygen carriers occurring freely dissolved in the hemolymph of many mollusks and arthropods. The polypeptide is Hemocyanin 2-c chain (Megathura crenulata (Giant keyhole limpet)).